The following is a 106-amino-acid chain: LLLVALAVAYAVPDPRGVIINLEAGEICLNSAQCKSECCHQESSLSLARCAAKASENSECSAWTLYGVYYKCPCERGLTCQVDKTLVGSIMNTNFGICFDAARSEE.

The signal sequence occupies residues 1-11 (LLLVALAVAYA). Residues 12–16 (VPDPR) constitute a propeptide, enterostatin, activation peptide. Cystine bridges form between C28/C39, C34/C50, C38/C72, C60/C80, and C74/C98. Taurodeoxycholate is bound at residue W63.

Belongs to the colipase family. Forms a 1:1 stoichiometric complex with pancreatic lipase. As to expression, expressed by the pancreas.

The protein resides in the secreted. Its function is as follows. Colipase is a cofactor of pancreatic lipase. It allows the lipase to anchor itself to the lipid-water interface. Without colipase the enzyme is washed off by bile salts, which have an inhibitory effect on the lipase. Functionally, enterostatin has a biological activity as a satiety signal. The protein is Colipase A (CLPS1) of Equus caballus (Horse).